Consider the following 394-residue polypeptide: Thioredoxin-interacting protein (394 aa).

Lys-212 participates in a covalent cross-link: Glycyl lysine isopeptide (Lys-Gly) (interchain with G-Cter in ubiquitin). Position 361 is a phosphoserine (Ser-361).

This sequence belongs to the arrestin family. In terms of assembly, homodimer; disulfide-linked. Interacts with TXN/thioredoxin through its redox-active site. Interacts with transcriptional repressors ZBTB16, ZBTB32 and HDAC1. Interacts with DDIT4. Ubiquitinated; undergoes heterotypic 'Lys-48'-/'Lys-63'-branched polyubiquitination catalyzed by ITCH and UBR5 resulting in proteasomal degradation. Deubiquitinated by USP5, leading to TXNIP stabilization.

It localises to the cytoplasm. May act as an oxidative stress mediator by inhibiting thioredoxin activity or by limiting its bioavailability. Interacts with COPS5 and restores COPS5-induced suppression of CDKN1B stability, blocking the COPS5-mediated translocation of CDKN1B from the nucleus to the cytoplasm. Functions as a transcriptional repressor, possibly by acting as a bridge molecule between transcription factors and corepressor complexes, and over-expression will induce G0/G1 cell cycle arrest. Required for the maturation of natural killer cells. Acts as a suppressor of tumor cell growth. Inhibits the proteasomal degradation of DDIT4, and thereby contributes to the inhibition of the mammalian target of rapamycin complex 1 (mTORC1). This chain is Thioredoxin-interacting protein (Txnip), found in Rattus norvegicus (Rat).